The primary structure comprises 652 residues: UvrABC system protein C (652 aa).

The GIY-YIG domain occupies 37–116 (KSSGCYLFKD…IKTNKPYFNI (80 aa)). In terms of domain architecture, UVR spans 226–261 (DDLEIFLQKKMLQFSNDLDYENAAKIRDQISGLKLL).

It belongs to the UvrC family. As to quaternary structure, interacts with UvrB in an incision complex.

The protein resides in the cytoplasm. Its function is as follows. The UvrABC repair system catalyzes the recognition and processing of DNA lesions. UvrC both incises the 5' and 3' sides of the lesion. The N-terminal half is responsible for the 3' incision and the C-terminal half is responsible for the 5' incision. The sequence is that of UvrABC system protein C from Prochlorococcus marinus (strain MIT 9312).